We begin with the raw amino-acid sequence, 253 residues long: 3-deoxy-manno-octulosonate cytidylyltransferase (253 aa).

It belongs to the KdsB family.

The protein localises to the cytoplasm. The catalysed reaction is 3-deoxy-alpha-D-manno-oct-2-ulosonate + CTP = CMP-3-deoxy-beta-D-manno-octulosonate + diphosphate. The protein operates within nucleotide-sugar biosynthesis; CMP-3-deoxy-D-manno-octulosonate biosynthesis; CMP-3-deoxy-D-manno-octulosonate from 3-deoxy-D-manno-octulosonate and CTP: step 1/1. Its pathway is bacterial outer membrane biogenesis; lipopolysaccharide biosynthesis. Activates KDO (a required 8-carbon sugar) for incorporation into bacterial lipopolysaccharide in Gram-negative bacteria. This Pseudoalteromonas translucida (strain TAC 125) protein is 3-deoxy-manno-octulosonate cytidylyltransferase.